Reading from the N-terminus, the 512-residue chain is Cercosporin MFS transporter CTB4 (512 aa).

12 consecutive transmembrane segments (helical) span residues 72–92 (WVITMSLALYALSTTFSSSVF), 110–130 (VVLGCTSLFMVGFATGPIFWG), 142–162 (LLAGYLGFAVLQLPIADARSL), 170–190 (FLGGFFGAAPSSILSGILADI), 202–222 (TVGAFLTIGPILGPLIGSVLV), 230–250 (WIANVVAIASFLIALSTFPFL), 306–326 (ILLMMTLYVSVSFGLLYNFFL), 343–363 (ASLPLISILVGAIIAGALLSF), 383–403 (LLLMMVGAVSLPAGMFLFAWT), 407–427 (TMNPWPQILSGIPTGFGIHLI), 456–476 (LFAAGFPILATSMYAAIGVKW), and 480–500 (ILALLAVAMIPIPILFYYFGA).

It belongs to the major facilitator superfamily. CAR1 family.

The protein resides in the cell membrane. MFS transporter; part of the gene cluster that mediates the biosynthesis of cercosporin, a light-activated, non-host-selective toxin. The perylenequinone chromophore of cercosporin absorbs light energy to attain an electronically-activated triplet state and produces active oxygen species such as the hydroxyl radical, superoxide, hydrogen peroxide or singlet oxygen upon reaction with oxygen molecules. These reactive oxygen species cause damage to various cellular components including lipids, proteins and nucleic acids. Responsible for secretion and accumulation of cercosporin, but does not play any roles in self-protection against the toxicity of cercosporin. This Cercospora nicotianae (Barn spot disease fungus) protein is Cercosporin MFS transporter CTB4.